A 577-amino-acid polypeptide reads, in one-letter code: General transcription factor IIF subunit 1 (577 aa).

Residues 1 to 36 form a disordered region; that stretch reads MSSASKSTPSAASGSSTSAAAAAAASVASGSASSSA. A phosphoserine mark is found at serine 183, serine 246, serine 250, and serine 252. The disordered stretch occupies residues 236-508; sequence KITDMDEWID…TSLPTSFSGG (273 aa). A compositionally biased stretch (acidic residues) spans 240-256; it reads MDEWIDSEDESDSEDEE. Over residues 257–271 the composition is skewed to basic and acidic residues; that stretch reads DKKKKEQEDSDDGKA. Over residues 272 to 285 the composition is skewed to basic residues; it reads KGKGKKGADKKKKK. Acidic residues predominate over residues 289–304; the sequence is DDEAFEESDDGDEEGR. The segment covering 319–341 has biased composition (basic and acidic residues); that stretch reads PEAKVDKDMKGVAEEDALRKLLT. Phosphothreonine is present on threonine 341. Phosphoserine occurs at positions 342, 352, and 355. The segment covering 362–376 has biased composition (basic and acidic residues); that stretch reads GEKKKKDKGKDEVSK. A compositionally biased stretch (low complexity) spans 392 to 406; sequence SNGSGDSSTDFSSDS. The segment covering 423–437 has biased composition (basic and acidic residues); sequence VVKDKDKEKEKEKES. Over residues 438–456 the composition is skewed to low complexity; it reads AASSKVIASSSNANKSRSA. Serine 453 and serine 455 each carry phosphoserine. Threonine 457 carries the phosphothreonine modification. Composition is skewed to polar residues over residues 471–489 and 496–506; these read SLPS…TSTP and EISTSLPTSFS. Residues serine 482 and serine 484 each carry the phosphoserine modification. Phosphothreonine is present on threonine 488.

It belongs to the TFIIF alpha subunit family. As to quaternary structure, heterodimer of an alpha and a beta subunit. Post-translationally, phosphorylated on Ser and other residues by TAF1 and casein kinase II-like kinases.

It localises to the nucleus. In terms of biological role, TFIIF is a general transcription initiation factor that binds to RNA polymerase II and helps to recruit it to the initiation complex in collaboration with TFIIB. It promotes transcription elongation. The sequence is that of General transcription factor IIF subunit 1 from Drosophila melanogaster (Fruit fly).